A 212-amino-acid polypeptide reads, in one-letter code: Protein ERP5 (212 aa).

The first 20 residues, 1-20 (MKYNIVHGICLLFAITQAVG), serve as a signal peptide directing secretion. At 21-178 (AVHFYAKSGE…FRNQSESANS (158 aa)) the chain is on the lumenal side. One can recognise a GOLD domain in the interval 31–124 (TKCFYEHLSR…TLRVFIELEI (94 aa)). Asn-171 is a glycosylation site (N-linked (GlcNAc...) asparagine). Residues 179–199 (KIMTWSVFQLLILLGTCAFQL) traverse the membrane as a helical segment. The Cytoplasmic portion of the chain corresponds to 200–212 (RYLKNFFVKQKVV).

This sequence belongs to the EMP24/GP25L family.

It is found in the endoplasmic reticulum membrane. Functionally, involved in vesicular protein trafficking. The sequence is that of Protein ERP5 (ERP5) from Saccharomyces cerevisiae (strain ATCC 204508 / S288c) (Baker's yeast).